The primary structure comprises 942 residues: Endoprotease bli-4 (942 aa).

A signal peptide spans 1–22 (MRISIGRIAWQILAVLIAVAFT). The propeptide occupies 23–116 (IEHDSICDES…EQRPKKRVKR (94 aa)). Over 117–871 (DYILLDNDVH…TLLIDSNKSS (755 aa)) the chain is Lumenal. Asp124 contributes to the Ca(2+) binding site. The disordered stretch occupies residues 130-160 (PFRRSVLNRDGTRRAQRQQPQSPREIPSLPF). The Peptidase S8 domain occupies 168-483 (QWYLHGGAVG…YGLIDGGALV (316 aa)). Residue Asn195 is glycosylated (N-linked (GlcNAc...) asparagine). The active-site Charge relay system is Asp202. Residue Asp203 participates in substrate binding. 4 residues coordinate Ca(2+): Asp211, Asp223, Asp228, and Asp230. The interval 211-242 (DLAANYDPLASTDINDHDDDPTPQNNGDNKHG) is disordered. 238–239 (DN) is a substrate binding site. Residue His241 is the Charge relay system of the active site. Ca(2+) contacts are provided by Leu252, Asn255, Gln257, and Gly259. Cystine bridges form between Cys258-Cys407 and Cys350-Cys380. Residues Glu283, 300 to 305 (SWGPED), Asp311, and 339 to 342 (ASGN) each bind substrate. Asp305 is a binding site for Ca(2+). Position 348 (Asp348) interacts with Ca(2+). Asp353 and Tyr355 together coordinate substrate. Glu378 serves as a coordination point for Ca(2+). Ser415 acts as the Charge relay system in catalysis. Residue Ser415 participates in substrate binding. A P/Homo B domain is found at 491-629 (TVPEQHICTY…TLLLYGTADP (139 aa)). Cys498 and Cys527 are disulfide-bonded. Asn519 carries an N-linked (GlcNAc...) asparagine glycan. 3 FU repeats span residues 674–723 (NCHD…YYLD), 725–777 (DKCK…LVAD), and 804–850 (GKCD…STKS). An N-linked (GlcNAc...) asparagine glycan is attached at Asn868. The chain crosses the membrane as a helical span at residues 872–892 (GFGLMFWIVVSLIAACGICAC). Residues 893–942 (KKCASETKSSNVEYAPLAQYNATNGAINLGAHTDDEDDDEDEVFVNPQIV) lie on the Cytoplasmic side of the membrane. Residues 922-942 (GAHTDDEDDDEDEVFVNPQIV) are disordered. The segment covering 926–935 (DDEDDDEDEV) has biased composition (acidic residues).

Belongs to the peptidase S8 family. Furin subfamily. Ca(2+) serves as cofactor. In terms of tissue distribution, in larvae and adults, expressed in all hypodermal cells, vulva and ventral nerve cords. As to expression, most highly expressed isoform in the embryonic epidermis. Expressed primarily in the germline. In terms of tissue distribution, expressed primarily in pharyngeal epithelial cells.

Its subcellular location is the membrane. Serine endoprotease which cleaves proproteins at paired basic amino acids at the consensus RX(K/R)R motif. Involved in N-terminal processing of cuticle collagens and plays a role in cuticle biosynthesis. May cleave both sqt-3 and dpy-17 collagens to promote their secretion. Acts in ASEL sensory neurons to regulate high salt chemotaxis responses probably by cleaving insulin-like protein ins-6 into its mature and active form. Essential for embryonic and larval development. In terms of biological role, involved in cuticle biosynthesis but dispensable for larval development. The polypeptide is Endoprotease bli-4 (bli-4) (Caenorhabditis elegans).